A 110-amino-acid polypeptide reads, in one-letter code: Pathogenesis-related protein (110 aa).

A signal peptide spans 1 to 19; that stretch reads AFLLAATLTISSHMQEAGA.

It belongs to the thaumatin family.

The polypeptide is Pathogenesis-related protein (Juniperus virginiana (Eastern redcedar)).